Reading from the N-terminus, the 244-residue chain is 5-oxoprolinase subunit A (244 aa).

Belongs to the LamB/PxpA family. Forms a complex composed of PxpA, PxpB and PxpC.

The catalysed reaction is 5-oxo-L-proline + ATP + 2 H2O = L-glutamate + ADP + phosphate + H(+). Catalyzes the cleavage of 5-oxoproline to form L-glutamate coupled to the hydrolysis of ATP to ADP and inorganic phosphate. The chain is 5-oxoprolinase subunit A from Shigella dysenteriae serotype 1 (strain Sd197).